Reading from the N-terminus, the 163-residue chain is Endoribonuclease YbeY (163 aa).

Zn(2+)-binding residues include His-116, His-120, and His-126.

This sequence belongs to the endoribonuclease YbeY family. Requires Zn(2+) as cofactor.

The protein localises to the cytoplasm. Its function is as follows. Single strand-specific metallo-endoribonuclease involved in late-stage 70S ribosome quality control and in maturation of the 3' terminus of the 16S rRNA. The protein is Endoribonuclease YbeY of Idiomarina loihiensis (strain ATCC BAA-735 / DSM 15497 / L2-TR).